The sequence spans 116 residues: Ribonuclease P protein component (116 aa).

This sequence belongs to the RnpA family. As to quaternary structure, consists of a catalytic RNA component (M1 or rnpB) and a protein subunit.

It catalyses the reaction Endonucleolytic cleavage of RNA, removing 5'-extranucleotides from tRNA precursor.. Its function is as follows. RNaseP catalyzes the removal of the 5'-leader sequence from pre-tRNA to produce the mature 5'-terminus. It can also cleave other RNA substrates such as 4.5S RNA. The protein component plays an auxiliary but essential role in vivo by binding to the 5'-leader sequence and broadening the substrate specificity of the ribozyme. In Picosynechococcus sp. (strain ATCC 27264 / PCC 7002 / PR-6) (Agmenellum quadruplicatum), this protein is Ribonuclease P protein component.